A 405-amino-acid chain; its full sequence is Transposase from transposon Tn916 (405 aa).

The 85-residue stretch at 79–163 (GKKMTLCQLY…SLKASFYIAI (85 aa)) folds into the Core-binding (CB) domain. A Tyr recombinase domain is found at 186-392 (VPKTVLTEEQ…TFDSAMAEMK (207 aa)). Catalysis depends on residues Arg-225, Lys-264, His-343, Arg-346, and His-369. Tyr-379 (O-(3'-phospho-DNA)-tyrosine intermediate) is an active-site residue.

The protein belongs to the 'phage' integrase family.

This chain is Transposase from transposon Tn916 (Int-Tn), found in Enterococcus faecalis (Streptococcus faecalis).